A 309-amino-acid polypeptide reads, in one-letter code: Taste receptor type 2 member 31 (309 aa).

Residues M1 to T2 are Extracellular-facing. A helical transmembrane segment spans residues T3–A23. The Cytoplasmic segment spans residues N24–R55. A helical membrane pass occupies residues V56 to Y76. Residues S77–T100 are Extracellular-facing. The chain crosses the membrane as a helical span at residues S101–L121. The Cytoplasmic portion of the chain corresponds to K122–K126. A helical transmembrane segment spans residues S127–I147. Residues N148–T181 lie on the Extracellular side of the membrane. N161 carries an N-linked (GlcNAc...) asparagine glycan. A helical transmembrane segment spans residues L182–L202. Topologically, residues C203–Q229 are cytoplasmic. Residues T230–W250 traverse the membrane as a helical segment. The Extracellular segment spans residues S251–P259. A helical membrane pass occupies residues V260 to I280. Topologically, residues W281–P309 are cytoplasmic.

Belongs to the G-protein coupled receptor T2R family.

It localises to the membrane. In terms of biological role, receptor that may play a role in the perception of bitterness and is gustducin-linked. May play a role in sensing the chemical composition of the gastrointestinal content. The activity of this receptor may stimulate alpha gustducin, mediate PLC-beta-2 activation and lead to the gating of TRPM5. The sequence is that of Taste receptor type 2 member 31 (TAS2R31) from Pan paniscus (Pygmy chimpanzee).